The sequence spans 486 residues: GDP-Man:Man(3)GlcNAc(2)-PP-Dol alpha-1,2-mannosyltransferase (486 aa).

At M1–A16 the chain is on the lumenal side. Residues L17 to I37 form a helical membrane-spanning segment. The Cytoplasmic portion of the chain corresponds to C38 to K229. An intramembrane region (helical) is located at residues L230 to I250. Topologically, residues M251 to H393 are cytoplasmic. Residues F394–G414 constitute an intramembrane region (helical). The Cytoplasmic segment spans residues G415–K486.

It belongs to the glycosyltransferase group 1 family. Glycosyltransferase 4 subfamily.

Its subcellular location is the endoplasmic reticulum membrane. The enzyme catalyses an alpha-D-Man-(1-&gt;3)-[alpha-D-Man-(1-&gt;6)]-beta-D-Man-(1-&gt;4)-beta-D-GlcNAc-(1-&gt;4)-alpha-D-GlcNAc-diphospho-di-trans,poly-cis-dolichol + 2 GDP-alpha-D-mannose = an alpha-D-Man-(1-&gt;2)-alpha-D-Man-(1-&gt;2)-alpha-D-Man-(1-&gt;3)-[alpha-D-Man-(1-&gt;6)]-beta-D-Man-(1-&gt;4)-beta-D-GlcNAc-(1-&gt;4)-alpha-D-GlcNAc-diphospho-di-trans,poly-cis-dolichol + 2 GDP + 2 H(+). Its pathway is protein modification; protein glycosylation. Its function is as follows. GDP-Man:Man(3)GlcNAc(2)-PP-Dol alpha-1,2-mannosyltransferase that operates in the biosynthetic pathway of dolichol-linked oligosaccharides, the glycan precursors employed in protein asparagine (N)-glycosylation. The assembly of dolichol-linked oligosaccharides begins on the cytosolic side of the endoplasmic reticulum membrane and finishes in its lumen. The sequential addition of sugars to dolichol pyrophosphate produces dolichol-linked oligosaccharides containing fourteen sugars, including two GlcNAcs, nine mannoses and three glucoses. Once assembled, the oligosaccharide is transferred from the lipid to nascent proteins by oligosaccharyltransferases. Catalyzes, on the cytoplasmic face of the endoplasmic reticulum, the addition of the fourth and fifth mannose residues to the dolichol-linked oligosaccharide chain, to produce Man(5)GlcNAc(2)-PP-dolichol core oligosaccharide. Man(5)GlcNAc(2)-PP-dolichol is a substrate for ALG3, the following enzyme in the biosynthetic pathway. The sequence is that of GDP-Man:Man(3)GlcNAc(2)-PP-Dol alpha-1,2-mannosyltransferase (alg11) from Xenopus laevis (African clawed frog).